The chain runs to 289 residues: DNA repair protein rad14 (289 aa).

Residues cysteine 116, cysteine 119, cysteine 137, and cysteine 140 each contribute to the Zn(2+) site. Residues 116–140 (CFECDSIELDTKYFDIFHCRVCHTC) fold into a zinc finger.

Belongs to the XPA family. Interacts with hrq1.

The protein resides in the nucleus. Involved in nucleotide excision repair (NER). Functional in repair of ultraviolet radiation induced damages and in mitotic mutation avoidance. Binds damaged DNA. Binds specifically to base-base mismatches or small insertion/deletion loops with unpaired nucleotides. Maintains GT repeat stability. Functions as a part of the short-patch excision repair system. The sequence is that of DNA repair protein rad14 from Schizosaccharomyces pombe (strain 972 / ATCC 24843) (Fission yeast).